The sequence spans 230 residues: 2,3-bisphosphoglycerate-dependent phosphoglycerate mutase (230 aa).

Substrate contacts are provided by residues 8 to 15 (RHGESEWN), 21 to 22 (TG), Arg60, 87 to 90 (ERHY), Lys98, 114 to 115 (RR), and 183 to 184 (GN). His9 serves as the catalytic Tele-phosphohistidine intermediate. The Proton donor/acceptor role is filled by Glu87.

It belongs to the phosphoglycerate mutase family. BPG-dependent PGAM subfamily.

The enzyme catalyses (2R)-2-phosphoglycerate = (2R)-3-phosphoglycerate. It participates in carbohydrate degradation; glycolysis; pyruvate from D-glyceraldehyde 3-phosphate: step 3/5. Catalyzes the interconversion of 2-phosphoglycerate and 3-phosphoglycerate. The chain is 2,3-bisphosphoglycerate-dependent phosphoglycerate mutase from Streptococcus sanguinis (strain SK36).